An 897-amino-acid polypeptide reads, in one-letter code: DNA polymerase I (897 aa).

Residues 1–317 (MEQPVIKEGT…ILDNTPALDN (317 aa)) enclose the 5'-3' exonuclease domain. The 177-residue stretch at 318 to 494 (APKKSRMIVL…RLCEYFEKGG (177 aa)) folds into the 3'-5' exonuclease domain. The polymerase stretch occupies residues 498 to 896 (DLLTLARDIE…FIAKRWNELK (399 aa)).

It belongs to the DNA polymerase type-A family. As to quaternary structure, single-chain monomer with multiple functions.

The enzyme catalyses DNA(n) + a 2'-deoxyribonucleoside 5'-triphosphate = DNA(n+1) + diphosphate. Functionally, in addition to polymerase activity, this DNA polymerase exhibits 3'-5' and 5'-3' exonuclease activity. This chain is DNA polymerase I (polA), found in Helicobacter pylori (strain J99 / ATCC 700824) (Campylobacter pylori J99).